The primary structure comprises 389 residues: Brix domain-containing protein C1B9.03c (389 aa).

The Brix domain maps to 28–309; sequence SMVIRSGASE…LIKITEDAMG (282 aa). Over residues 323 to 350 the composition is skewed to basic and acidic residues; that stretch reads EEIKQQDNFHEQSRALKEKRKKEQDENV. Positions 323–389 are disordered; sequence EEIKQQDNFH…EGSSAYSDTE (67 aa). Residues 351–362 are compositionally biased toward basic residues; that stretch reads RRKRENKKRRKD. Serine 377 bears the Phosphoserine mark. Polar residues predominate over residues 379–389; the sequence is NEGSSAYSDTE.

This Schizosaccharomyces pombe (strain 972 / ATCC 24843) (Fission yeast) protein is Brix domain-containing protein C1B9.03c.